We begin with the raw amino-acid sequence, 264 residues long: 3-methyl-2-oxobutanoate hydroxymethyltransferase (264 aa).

The Mg(2+) site is built by Asp45 and Asp84. 3-methyl-2-oxobutanoate-binding positions include 45–46 (DS), Asp84, and Lys112. Glu114 lines the Mg(2+) pocket. Glu181 acts as the Proton acceptor in catalysis.

Belongs to the PanB family. Homodecamer; pentamer of dimers. Mg(2+) serves as cofactor.

The protein localises to the cytoplasm. It catalyses the reaction 3-methyl-2-oxobutanoate + (6R)-5,10-methylene-5,6,7,8-tetrahydrofolate + H2O = 2-dehydropantoate + (6S)-5,6,7,8-tetrahydrofolate. Its pathway is cofactor biosynthesis; (R)-pantothenate biosynthesis; (R)-pantoate from 3-methyl-2-oxobutanoate: step 1/2. Its function is as follows. Catalyzes the reversible reaction in which hydroxymethyl group from 5,10-methylenetetrahydrofolate is transferred onto alpha-ketoisovalerate to form ketopantoate. This Vibrio parahaemolyticus serotype O3:K6 (strain RIMD 2210633) protein is 3-methyl-2-oxobutanoate hydroxymethyltransferase.